A 137-amino-acid chain; its full sequence is ATP synthase epsilon chain (137 aa).

It belongs to the ATPase epsilon chain family. In terms of assembly, F-type ATPases have 2 components, CF(1) - the catalytic core - and CF(0) - the membrane proton channel. CF(1) has five subunits: alpha(3), beta(3), gamma(1), delta(1), epsilon(1). CF(0) has three main subunits: a, b and c.

It is found in the cell membrane. Produces ATP from ADP in the presence of a proton gradient across the membrane. This Desulforudis audaxviator (strain MP104C) protein is ATP synthase epsilon chain.